A 404-amino-acid polypeptide reads, in one-letter code: NADH-quinone oxidoreductase subunit D 1 (404 aa).

Belongs to the complex I 49 kDa subunit family. In terms of assembly, NDH-1 is composed of 14 different subunits. Subunits NuoB, C, D, E, F, and G constitute the peripheral sector of the complex.

It is found in the cell inner membrane. The catalysed reaction is a quinone + NADH + 5 H(+)(in) = a quinol + NAD(+) + 4 H(+)(out). Functionally, NDH-1 shuttles electrons from NADH, via FMN and iron-sulfur (Fe-S) centers, to quinones in the respiratory chain. The immediate electron acceptor for the enzyme in this species is believed to be ubiquinone. Couples the redox reaction to proton translocation (for every two electrons transferred, four hydrogen ions are translocated across the cytoplasmic membrane), and thus conserves the redox energy in a proton gradient. The chain is NADH-quinone oxidoreductase subunit D 1 from Sorangium cellulosum (strain So ce56) (Polyangium cellulosum (strain So ce56)).